A 260-amino-acid chain; its full sequence is Carbonic anhydrase 3 (260 aa).

At alanine 2 the chain carries N-acetylalanine. Residues 3–259 (KEWGYADHNG…IKGRIVKASF (257 aa)) form the Alpha-carbonic anhydrase domain. Phosphoserine occurs at positions 29, 43, 50, and 55. An involved in proton transfer region spans residues 64 to 67 (KTCR). The residue at position 73 (threonine 73) is a Phosphothreonine. Histidine 94, histidine 96, and histidine 119 together coordinate Zn(2+). Residue tyrosine 127 is modified to Phosphotyrosine. An S-glutathionyl cysteine mark is found at cysteine 182 and cysteine 187. 198–199 (TT) serves as a coordination point for substrate. Phosphothreonine is present on threonine 216. Serine 219 is modified (phosphoserine).

It belongs to the alpha-carbonic anhydrase family. Zn(2+) is required as a cofactor. Post-translationally, S-thiolated both by thiol-disulfide exchange with glutathione disulfide and by oxyradical-initiated S-thiolation with reduced glutathione. S-glutathionylated in hepatocytes under oxidative stress.

It is found in the cytoplasm. It carries out the reaction hydrogencarbonate + H(+) = CO2 + H2O. Its activity is regulated as follows. Inhibited by acetazolamide. In terms of biological role, reversible hydration of carbon dioxide. The protein is Carbonic anhydrase 3 (CA3) of Bos taurus (Bovine).